The following is a 485-amino-acid chain: UDP-N-acetylmuramate--L-alanine ligase (485 aa).

Gly-129–Thr-135 serves as a coordination point for ATP.

The protein belongs to the MurCDEF family.

The protein resides in the cytoplasm. The catalysed reaction is UDP-N-acetyl-alpha-D-muramate + L-alanine + ATP = UDP-N-acetyl-alpha-D-muramoyl-L-alanine + ADP + phosphate + H(+). The protein operates within cell wall biogenesis; peptidoglycan biosynthesis. Cell wall formation. The sequence is that of UDP-N-acetylmuramate--L-alanine ligase from Vibrio campbellii (strain ATCC BAA-1116).